A 309-amino-acid chain; its full sequence is Chronophin (309 aa).

Asp25 (nucleophile) is an active-site residue. The Mg(2+) site is built by Asp25 and Asp27. The active-site Proton donor is the Asp27. Residues 58-60, His178, and Lys209 each bind substrate; that span reads SNN. Asp234 serves as a coordination point for Mg(2+).

This sequence belongs to the HAD-like hydrolase superfamily. Homodimer. It depends on Mg(2+) as a cofactor.

The protein resides in the cytoplasm. The protein localises to the cytosol. Its subcellular location is the cytoskeleton. It localises to the cell projection. It is found in the ruffle membrane. The protein resides in the lamellipodium membrane. The protein localises to the cell membrane. It catalyses the reaction pyridoxal 5'-phosphate + H2O = pyridoxal + phosphate. It carries out the reaction pyridoxine 5'-phosphate + H2O = pyridoxine + phosphate. The catalysed reaction is pyridoxamine + phosphate = pyridoxamine 5'-phosphate + H2O. The enzyme catalyses O-phospho-L-seryl-[protein] + H2O = L-seryl-[protein] + phosphate. In terms of biological role, functions as a pyridoxal phosphate (PLP) phosphatase, which also catalyzes the dephosphorylation of pyridoxine 5'-phosphate (PNP) and pyridoxamine 5'-phosphate (PMP), with order of substrate preference PLP &gt; PNP &gt; PMP and therefore plays a role in vitamin B6 metabolism. Also functions as a protein serine phosphatase that specifically dephosphorylates 'Ser-3' in proteins of the actin-depolymerizing factor (ADF)/cofilin family like CFL1 and DSTN. Thereby, regulates cofilin-dependent actin cytoskeleton reorganization, being required for normal progress through mitosis and normal cytokinesis. Does not dephosphorylate phosphothreonines in LIMK1. Does not dephosphorylate peptides containing phosphotyrosine. This Rattus norvegicus (Rat) protein is Chronophin.